We begin with the raw amino-acid sequence, 201 residues long: MRRKLVLASNNAGKVRELQTLISTSGFEIVPQGALGIPEAEETGASFVENALIKAYHAARHSGLPAIADDSGLEVDALGGEPGVHSARYAGPAASDDDNIDRLLAALDGVEAGRRGARFRCVMVFVRDAEDTGPLIAEGCWEGWIGENRRGSGGFGYDPVFLVPGTGLSAAELPPEDKNRLSHRGQAAAVLASRLRALTGG.

Residue Ser-9–Lys-14 participates in substrate binding. Residues Glu-41 and Asp-70 each contribute to the Mg(2+) site. Residue Asp-70 is the Proton acceptor of the active site. Substrate is bound by residues Ser-71, Phe-155–Asp-158, Lys-178, and His-183–Arg-184.

This sequence belongs to the HAM1 NTPase family. As to quaternary structure, homodimer. The cofactor is Mg(2+).

It carries out the reaction XTP + H2O = XMP + diphosphate + H(+). It catalyses the reaction dITP + H2O = dIMP + diphosphate + H(+). The enzyme catalyses ITP + H2O = IMP + diphosphate + H(+). Pyrophosphatase that catalyzes the hydrolysis of nucleoside triphosphates to their monophosphate derivatives, with a high preference for the non-canonical purine nucleotides XTP (xanthosine triphosphate), dITP (deoxyinosine triphosphate) and ITP. Seems to function as a house-cleaning enzyme that removes non-canonical purine nucleotides from the nucleotide pool, thus preventing their incorporation into DNA/RNA and avoiding chromosomal lesions. In Methylococcus capsulatus (strain ATCC 33009 / NCIMB 11132 / Bath), this protein is dITP/XTP pyrophosphatase.